The chain runs to 647 residues: LIM domain kinase 1 (647 aa).

LIM zinc-binding domains follow at residues 25–75 and 84–137; these read CASC…CKKD and CHGC…CGQC. Residues 165–258 enclose the PDZ domain; it reads LVSIPASAHG…LLQLTLEHDP (94 aa). Residue Ser-210 is modified to Phosphoserine. Phosphothreonine is present on Thr-229. The segment at 256 to 319 is disordered; that stretch reads HDPHDSLGHG…SPASQRKDLG (64 aa). Residues 266–277 are compositionally biased toward low complexity; it reads PVSDPSPLSSPV. 2 stretches are compositionally biased toward polar residues: residues 278–289 and 298–313; these read HTPSGQAASSAR and SIDTSPGTSSLASPAS. Ser-298, Ser-302, Ser-307, and Ser-310 each carry phosphoserine. Ser-323 carries the phosphoserine; by MAPKAPK2 modification. Ser-337 bears the Phosphoserine mark. Residues 339-604 enclose the Protein kinase domain; that stretch reads LIHGEVLGKG…PSFVKLEQWL (266 aa). ATP is bound by residues 345–353 and Lys-368; that span reads LGKGCFGQA. Asp-460 is an active-site residue. Phosphothreonine; by ROCK1 is present on Thr-508.

It belongs to the protein kinase superfamily. TKL Ser/Thr protein kinase family. In terms of assembly, self-associates to form homodimers. Interacts with HSP90AA1; this interaction promotes LIMK1 dimerization and subsequent transphosphorylation. Interacts with CDKN1C. Interacts (via LIM domain) with the cytoplasmic domain of NRG1. Interacts with NISCH. Interacts with SSH1. Interacts with RLIM and RNF6. Interacts (via LIM zinc-binding domains) with FAM89B/LRAP25 (via LRR repeat). Forms a tripartite complex with CDC42BPA, CDC42BPB and FAM89B/LRAP25. Autophosphorylated. Phosphorylated on Thr-508 by ROCK1 and PAK1, resulting in activation. Phosphorylated by PAK4 which increases the ability of LIMK1 to phosphorylate cofilin. Phosphorylated at Ser-323 by MAPKAPK2 during activation of VEGFA-induced signaling, which results in activation of LIMK1 and promotion of actin reorganization, cell migration, and tubule formation of endothelial cells. Dephosphorylated and inactivated by SSH1. Phosphorylated by CDC42BP. Post-translationally, ubiquitinated. 'Lys-48'-linked polyubiquitination by RNF6 leads to proteasomal degradation through the 26S proteasome, modulating LIMK1 levels in the growth cone and its effect on axonal outgrowth. Also polyubiquitinated by RLIM. In terms of tissue distribution, highest expression in the nervous system, particularly in the spinal cord and the cranial nerve and dorsal root ganglia.

It is found in the cytoplasm. The protein localises to the nucleus. It localises to the cytoskeleton. The protein resides in the cell projection. Its subcellular location is the lamellipodium. It catalyses the reaction L-seryl-[protein] + ATP = O-phospho-L-seryl-[protein] + ADP + H(+). It carries out the reaction L-threonyl-[protein] + ATP = O-phospho-L-threonyl-[protein] + ADP + H(+). Functionally, serine/threonine-protein kinase that plays an essential role in the regulation of actin filament dynamics. Acts downstream of several Rho family GTPase signal transduction pathways. Activated by upstream kinases including ROCK1, PAK1 and PAK4, which phosphorylate LIMK1 on a threonine residue located in its activation loop. LIMK1 subsequently phosphorylates and inactivates the actin binding/depolymerizing factors cofilin-1/CFL1, cofilin-2/CFL2 and destrin/DSTN, thereby preventing the cleavage of filamentous actin (F-actin), and stabilizing the actin cytoskeleton. In this way LIMK1 regulates several actin-dependent biological processes including cell motility, cell cycle progression, and differentiation. Phosphorylates TPPP on serine residues, thereby promoting microtubule disassembly. Stimulates axonal outgrowth and may be involved in brain development. This is LIM domain kinase 1 (Limk1) from Mus musculus (Mouse).